The sequence spans 175 residues: Small ribosomal subunit protein uS7 (175 aa).

This sequence belongs to the universal ribosomal protein uS7 family. In terms of assembly, part of the 30S ribosomal subunit. Contacts proteins S9 and S11.

Its function is as follows. One of the primary rRNA binding proteins, it binds directly to 16S rRNA where it nucleates assembly of the head domain of the 30S subunit. Is located at the subunit interface close to the decoding center, probably blocks exit of the E-site tRNA. This Neorickettsia sennetsu (strain ATCC VR-367 / Miyayama) (Ehrlichia sennetsu) protein is Small ribosomal subunit protein uS7.